A 181-amino-acid polypeptide reads, in one-letter code: Large ribosomal subunit protein uL5 (181 aa).

It belongs to the universal ribosomal protein uL5 family. As to quaternary structure, part of the 50S ribosomal subunit; part of the 5S rRNA/L5/L18/L25 subcomplex. Contacts the 5S rRNA and the P site tRNA. Forms a bridge to the 30S subunit in the 70S ribosome.

Its function is as follows. This is one of the proteins that bind and probably mediate the attachment of the 5S RNA into the large ribosomal subunit, where it forms part of the central protuberance. In the 70S ribosome it contacts protein S13 of the 30S subunit (bridge B1b), connecting the 2 subunits; this bridge is implicated in subunit movement. Contacts the P site tRNA; the 5S rRNA and some of its associated proteins might help stabilize positioning of ribosome-bound tRNAs. This Helicobacter pylori (strain P12) protein is Large ribosomal subunit protein uL5.